The following is a 166-amino-acid chain: uncharacterized protein (166 aa).

4Fe-4S ferredoxin-type domains lie at 44–73, 75–104, and 139–166; these read ARED…LKQQ, ATLE…PNFP, and STLE…ITLK. [4Fe-4S] cluster is bound by residues Cys53, Cys56, Cys59, Cys63, Cys84, Cys87, Cys90, and Cys94.

This is an uncharacterized protein from Haemophilus influenzae (strain ATCC 51907 / DSM 11121 / KW20 / Rd).